The primary structure comprises 396 residues: MAKLDAYFGEYGGQYVPQILVPALDQLEQAFIDAQADPEFRSEFMTLLQEYAGRPTALTLTRNLTKGTKTKLYLKREDLLHGGAHKTNQVLGQALLAKRMGKQEIIAETGAGQHGVATALACALLGLKCRVYMGAKDVERQSPNVFRMKLMGAEVIPVHSGSSTLKDACNEALRDWSATYEDAHYLLGTAAGPHPFPTIVRDFQRMIGEETKNQILAREGRLPDAVIACVGGGSNAIGMFADFIEEESVRLIGVEPAGKGIDTDQHGAPLKHGKTGIFFGMKAPLMQDENGQVEESYSVSAGLDFPSVGPQHAHLNAIGRAEYDNVTDDEALEAFQLIARKEGIIAALESSHALAHAVKMAHDDPEKEQLLVVNLSGRGDKDIFSVHDILKEKGAL.

Residue Lys86 is modified to N6-(pyridoxal phosphate)lysine.

Belongs to the TrpB family. Tetramer of two alpha and two beta chains. Pyridoxal 5'-phosphate serves as cofactor.

The enzyme catalyses (1S,2R)-1-C-(indol-3-yl)glycerol 3-phosphate + L-serine = D-glyceraldehyde 3-phosphate + L-tryptophan + H2O. It functions in the pathway amino-acid biosynthesis; L-tryptophan biosynthesis; L-tryptophan from chorismate: step 5/5. Functionally, the beta subunit is responsible for the synthesis of L-tryptophan from indole and L-serine. This Vibrio atlanticus (strain LGP32) (Vibrio splendidus (strain Mel32)) protein is Tryptophan synthase beta chain.